Reading from the N-terminus, the 397-residue chain is Pectate lyase (397 aa).

Positions 1-25 (MDVYRIRISVFFLLVLLTFAALTTA) are cleaved as a signal peptide. N134 is a glycosylation site (N-linked (GlcNAc...) asparagine). Ca(2+)-binding residues include D191, D216, and D220. An N-linked (GlcNAc...) asparagine glycan is attached at N227. The active site involves R272.

It belongs to the polysaccharide lyase 1 family. Requires Ca(2+) as cofactor.

It catalyses the reaction Eliminative cleavage of (1-&gt;4)-alpha-D-galacturonan to give oligosaccharides with 4-deoxy-alpha-D-galact-4-enuronosyl groups at their non-reducing ends.. The protein operates within glycan metabolism; pectin degradation; 2-dehydro-3-deoxy-D-gluconate from pectin: step 2/5. The protein is Pectate lyase of Nicotiana tabacum (Common tobacco).